The sequence spans 38 residues: MARPNPNKQVVELNRTSLYFGLLLIFVLAVLFSSYIFN.

The helical transmembrane segment at 17-37 (SLYFGLLLIFVLAVLFSSYIF) threads the bilayer.

Belongs to the PsbL family. PSII is composed of 1 copy each of membrane proteins PsbA, PsbB, PsbC, PsbD, PsbE, PsbF, PsbH, PsbI, PsbJ, PsbK, PsbL, PsbM, PsbT, PsbX, PsbY, PsbZ, Psb30/Ycf12, at least 3 peripheral proteins of the oxygen-evolving complex and a large number of cofactors. It forms dimeric complexes.

The protein localises to the plastid. It is found in the chloroplast thylakoid membrane. One of the components of the core complex of photosystem II (PSII). PSII is a light-driven water:plastoquinone oxidoreductase that uses light energy to abstract electrons from H(2)O, generating O(2) and a proton gradient subsequently used for ATP formation. It consists of a core antenna complex that captures photons, and an electron transfer chain that converts photonic excitation into a charge separation. This subunit is found at the monomer-monomer interface and is required for correct PSII assembly and/or dimerization. In Chlamydomonas moewusii (Chlamydomonas eugametos), this protein is Photosystem II reaction center protein L.